The primary structure comprises 321 residues: MQITFLGTSSGVPTRSRNVSSIALRLPQRAELWLFDCGEGTQHQFLRSDLKVSQLSRIFITHMHGDHVFGLMGLLASCGLGGNVKSVTLYGPPALEDYLQAGLRYSQTHLAYPIKVHKSKPGVIYEDDEYVVSCAYLKHRVTAFGYRVTEKDRPGHFNVEKAKALGIPPGPIYRKLKQGEFVTLPDGRKINGADLCGAPHVGRKFVYCTDTVFCDGAVELSQGADLLVHEATFSHQDAEMAFQRLHSTSTMAAQVALAAGVKHLMMTHFSPRYAPGNSVLLDDLLQEARAIFPNTDMAYDFLSYEIPRWNEVSQLLAKARS.

Zn(2+) is bound by residues H62, H64, D66, H67, H139, D210, and H268. D66 functions as the Proton acceptor in the catalytic mechanism.

Belongs to the RNase Z family. Homodimer. Zn(2+) is required as a cofactor.

It carries out the reaction Endonucleolytic cleavage of RNA, removing extra 3' nucleotides from tRNA precursor, generating 3' termini of tRNAs. A 3'-hydroxy group is left at the tRNA terminus and a 5'-phosphoryl group is left at the trailer molecule.. Its function is as follows. Zinc phosphodiesterase, which displays some tRNA 3'-processing endonuclease activity. Probably involved in tRNA maturation, by removing a 3'-trailer from precursor tRNA. This chain is Ribonuclease Z, found in Trichodesmium erythraeum (strain IMS101).